Here is an 88-residue protein sequence, read N- to C-terminus: Small ribosomal subunit protein uS17 (88 aa).

It belongs to the universal ribosomal protein uS17 family. Part of the 30S ribosomal subunit.

Its function is as follows. One of the primary rRNA binding proteins, it binds specifically to the 5'-end of 16S ribosomal RNA. The protein is Small ribosomal subunit protein uS17 of Pseudomonas fluorescens (strain SBW25).